Reading from the N-terminus, the 1714-residue chain is uncharacterized protein (1714 aa).

Disordered regions lie at residues 47-70 (SVAG…SDDL) and 584-616 (KKTG…KSKK). ATP contacts are provided by residues 607–614 (ATKESGKS) and 806–813 (APTSAGKT). The segment covering 607-616 (ATKESGKSKK) has biased composition (basic and acidic residues). The Helicase ATP-binding domain occupies 793–963 (LDSVDRGNSA…WLNSSEQAKS (171 aa)). The DEVH box signature appears at 913-916 (DEVH). A disordered region spans residues 1197-1223 (KRKRDDAEKKKKGDKDEDAGPEKDDDE). Residues 1199-1218 (KRDDAEKKKKGDKDEDAGPE) are compositionally biased toward basic and acidic residues. The Helicase C-terminal domain maps to 1237 to 1391 (ALERFKLRGR…NPPFTVLFLL (155 aa)).

It belongs to the helicase family. SKI2 subfamily.

It is found in the nucleus. This is an uncharacterized protein from Caenorhabditis elegans.